The chain runs to 630 residues: Zinc finger protein MSN4 (630 aa).

Residue Met1 is modified to N-acetylmethionine. Over residues 37–56 (TTNVSATSSNDNSANNSISS) the composition is skewed to low complexity. Disordered stretches follow at residues 37–77 (TTNV…ATNT) and 115–137 (FVND…DKIY). Phosphoserine is present on Ser178. The 9aaTAD motif lies at 237 to 245 (SILEDFVSS). The residue at position 263 (Ser263) is a Phosphoserine. The span at 292–303 (KNSSNSKPTQQI) shows a compositional bias: polar residues. Disordered stretches follow at residues 292 to 322 (KNSS…SPTT) and 360 to 379 (SISS…RQQR). 2 positions are modified to phosphoserine: Ser316 and Ser319. Residues 360–373 (SISSSLNRISHSSS) show a composition bias toward low complexity. Thr479 carries the phosphothreonine modification. Residues 502–566 (TSQAHHAAQH…KSITTIDPNN (65 aa)) are disordered. The segment covering 504 to 515 (QAHHAAQHHQQQ) has biased composition (low complexity). Composition is skewed to polar residues over residues 516–525 (PTKQATVSPN) and 532–547 (SSVT…NNNG). Ser558 bears the Phosphoserine mark. 2 C2H2-type zinc fingers span residues 573-596 (FKCK…RSVH) and 602-624 (FACM…LKTH).

Its subcellular location is the cytoplasm. It is found in the nucleus. Positive transcriptional factor that acts as a component of the stress responsive system. Recognizes and binds to the stress response element (STRE) which is involved in the response to various forms of stress (heat, oxidative, osmotic, etc.). Involved in the regulation of the CTT1, DDR2, HSP12 genes. The polypeptide is Zinc finger protein MSN4 (MSN4) (Saccharomyces cerevisiae (strain ATCC 204508 / S288c) (Baker's yeast)).